A 140-amino-acid chain; its full sequence is Nucleoside diphosphate kinase (140 aa).

Residues Lys-11, Phe-59, Arg-87, Thr-93, Arg-104, and Asn-114 each contribute to the ATP site. His-117 serves as the catalytic Pros-phosphohistidine intermediate.

The protein belongs to the NDK family. In terms of assembly, homotetramer. It depends on Mg(2+) as a cofactor.

The protein resides in the cytoplasm. The catalysed reaction is a 2'-deoxyribonucleoside 5'-diphosphate + ATP = a 2'-deoxyribonucleoside 5'-triphosphate + ADP. The enzyme catalyses a ribonucleoside 5'-diphosphate + ATP = a ribonucleoside 5'-triphosphate + ADP. In terms of biological role, major role in the synthesis of nucleoside triphosphates other than ATP. The ATP gamma phosphate is transferred to the NDP beta phosphate via a ping-pong mechanism, using a phosphorylated active-site intermediate. The protein is Nucleoside diphosphate kinase of Bradyrhizobium sp. (strain ORS 278).